The sequence spans 266 residues: Putative carbamate hydrolase RutD (266 aa).

In terms of domain architecture, AB hydrolase-1 spans 15-239 (PVVVLSAGLG…RVEMPWGGHA (225 aa)).

This sequence belongs to the AB hydrolase superfamily. Hydrolase RutD family.

The enzyme catalyses carbamate + 2 H(+) = NH4(+) + CO2. Its function is as follows. Involved in pyrimidine catabolism. May facilitate the hydrolysis of carbamate, a reaction that can also occur spontaneously. This Klebsiella variicola (strain At-22) protein is Putative carbamate hydrolase RutD.